A 258-amino-acid chain; its full sequence is UDP-2,3-diacylglucosamine hydrolase (258 aa).

5 residues coordinate Mn(2+): Asp-15, His-17, Asp-48, Asn-88, and His-123. Position 88-89 (88-89 (NR)) interacts with substrate. The substrate site is built by Asp-131, Ser-169, Asn-173, Lys-176, and His-204. Positions 204 and 206 each coordinate Mn(2+).

Belongs to the LpxH family. Mn(2+) is required as a cofactor.

It is found in the cell inner membrane. It catalyses the reaction UDP-2-N,3-O-bis[(3R)-3-hydroxytetradecanoyl]-alpha-D-glucosamine + H2O = 2-N,3-O-bis[(3R)-3-hydroxytetradecanoyl]-alpha-D-glucosaminyl 1-phosphate + UMP + 2 H(+). The protein operates within glycolipid biosynthesis; lipid IV(A) biosynthesis; lipid IV(A) from (3R)-3-hydroxytetradecanoyl-[acyl-carrier-protein] and UDP-N-acetyl-alpha-D-glucosamine: step 4/6. Functionally, hydrolyzes the pyrophosphate bond of UDP-2,3-diacylglucosamine to yield 2,3-diacylglucosamine 1-phosphate (lipid X) and UMP by catalyzing the attack of water at the alpha-P atom. Involved in the biosynthesis of lipid A, a phosphorylated glycolipid that anchors the lipopolysaccharide to the outer membrane of the cell. The chain is UDP-2,3-diacylglucosamine hydrolase from Bordetella bronchiseptica (strain ATCC BAA-588 / NCTC 13252 / RB50) (Alcaligenes bronchisepticus).